Here is a 347-residue protein sequence, read N- to C-terminus: Putative coenzyme F420-dependent oxidoreductase Rv3520c (347 aa).

The sequence is that of Putative coenzyme F420-dependent oxidoreductase Rv3520c from Mycobacterium tuberculosis (strain ATCC 25618 / H37Rv).